The chain runs to 406 residues: Serine hydroxymethyltransferase (406 aa).

Residues Leu111 and 115–117 (GHL) contribute to the (6S)-5,6,7,8-tetrahydrofolate site. Lys220 carries the post-translational modification N6-(pyridoxal phosphate)lysine.

The protein belongs to the SHMT family. As to quaternary structure, homodimer. Requires pyridoxal 5'-phosphate as cofactor.

It localises to the cytoplasm. It catalyses the reaction (6R)-5,10-methylene-5,6,7,8-tetrahydrofolate + glycine + H2O = (6S)-5,6,7,8-tetrahydrofolate + L-serine. It participates in one-carbon metabolism; tetrahydrofolate interconversion. It functions in the pathway amino-acid biosynthesis; glycine biosynthesis; glycine from L-serine: step 1/1. Catalyzes the reversible interconversion of serine and glycine with tetrahydrofolate (THF) serving as the one-carbon carrier. This reaction serves as the major source of one-carbon groups required for the biosynthesis of purines, thymidylate, methionine, and other important biomolecules. Also exhibits THF-independent aldolase activity toward beta-hydroxyamino acids, producing glycine and aldehydes, via a retro-aldol mechanism. The sequence is that of Serine hydroxymethyltransferase from Mycoplasma pneumoniae (strain ATCC 29342 / M129 / Subtype 1) (Mycoplasmoides pneumoniae).